We begin with the raw amino-acid sequence, 216 residues long: ATP synthase subunit C lysine N-methyltransferase (216 aa).

Met-1 is modified (N-acetylmethionine). The span at Met-1–Gln-12 shows a compositional bias: basic and acidic residues. The segment at Met-1 to Ser-25 is disordered. The chain crosses the membrane as a helical span at residues Trp-31–Thr-50. A required for mitochondrial location region spans residues Thr-51–Gly-85.

The protein belongs to the ANT/ATPSC lysine N-methyltransferase family.

It localises to the mitochondrion membrane. It carries out the reaction L-lysyl-[protein] + 3 S-adenosyl-L-methionine = N(6),N(6),N(6)-trimethyl-L-lysyl-[protein] + 3 S-adenosyl-L-homocysteine + 3 H(+). Mitochondrial protein-lysine N-methyltransferase that trimethylates ATP synthase subunit C, ATP5MC1 and ATP5MC2. Trimethylation is required for proper incorporation of the C subunit into the ATP synthase complex and mitochondrial respiration. Promotes chronic pain. Involved in persistent inflammatory and neuropathic pain: methyltransferase activity in the mitochondria of sensory neurons promotes chronic pain via a pathway that depends on the production of reactive oxygen species (ROS) and on the engagement of spinal cord microglia. This Rattus norvegicus (Rat) protein is ATP synthase subunit C lysine N-methyltransferase (Atpsckmt).